We begin with the raw amino-acid sequence, 238 residues long: Endo-chitosanase (238 aa).

The N-terminal stretch at 1–17 (MRLSEILTVALVTGATA) is a signal peptide. A glycan (N-linked (GlcNAc...) asparagine) is linked at N83.

This sequence belongs to the glycosyl hydrolase 75 family.

It is found in the secreted. It catalyses the reaction Endohydrolysis of beta-(1-&gt;4)-linkages between D-glucosamine residues in a partly acetylated chitosan.. Its function is as follows. Chitosanase catalyzing the endo-type cleavage of chitosan, the deacylated form of chitin. Chitosanase may be crucial in the degradation of the deacetylated portion of chitin in the fungal cell wall. Chitoolisaccharides produced by the hydrolysis of partially N-acetylated chitosan are known to have many biological activities, including antibacterial activity, immune-enhancing effects, and elicitor activity. The chitosans with higher degrees of deacetylation were shown to be the better substrates. Chitodimer, chitotrimer, and chitotetramer are the major products but monoacetyl chitodimer, monoacetyl chitotrimer, and monoacetyl chitotetramer are also produced. This is Endo-chitosanase (csn) from Aspergillus fumigatus (Neosartorya fumigata).